The chain runs to 87 residues: Putative septation protein SpoVG (87 aa).

It belongs to the SpoVG family.

Its function is as follows. Could be involved in septation. This Agathobacter rectalis (strain ATCC 33656 / DSM 3377 / JCM 17463 / KCTC 5835 / VPI 0990) (Eubacterium rectale) protein is Putative septation protein SpoVG.